Reading from the N-terminus, the 227-residue chain is Ion-translocating oxidoreductase complex subunit E (227 aa).

A run of 6 helical transmembrane segments spans residues 18-38 (ALVQ…VTNA), 39-59 (LGLG…VSLV), 69-89 (IPVF…LMNA), 93-113 (GLYL…IIIG), 125-145 (LPAV…LVLL), and 182-202 (HFLL…LIAL).

Belongs to the NqrDE/RnfAE family. As to quaternary structure, the complex is composed of six subunits: RnfA, RnfB, RnfC, RnfD, RnfE and RnfG.

The protein resides in the cell inner membrane. Part of a membrane-bound complex that couples electron transfer with translocation of ions across the membrane. In Aliivibrio fischeri (strain ATCC 700601 / ES114) (Vibrio fischeri), this protein is Ion-translocating oxidoreductase complex subunit E.